The sequence spans 314 residues: Olfactory receptor 52K2 (314 aa).

At 1 to 27 the chain is on the extracellular side; it reads MSASNITLTHPTAFLLVGIPGLEHLHI. Residue Asn5 is glycosylated (N-linked (GlcNAc...) asparagine). The chain crosses the membrane as a helical span at residues 28–48; the sequence is WISIPFCLAYTLALLGNCTLL. Residues 49 to 56 lie on the Cytoplasmic side of the membrane; that stretch reads LIIQADAA. Residues 57 to 77 traverse the membrane as a helical segment; it reads LHEPMYLFLAMLAAIDLVLSS. The Extracellular segment spans residues 78 to 101; sequence SALPKMLAIFWFRDREINFFACLA. A disulfide bridge connects residues Cys99 and Cys191. The helical transmembrane segment at 102–122 threads the bilayer; the sequence is QMFFLHSFSIMESAVLLAMAF. The Cytoplasmic portion of the chain corresponds to 123 to 141; the sequence is DRYVAICKPLHYTKVLTGS. A helical transmembrane segment spans residues 142–162; sequence LITKIGMAAVARAVTLMTPLP. Over 163-198 the chain is Extracellular; that stretch reads FLLRCFHYCRGPVIAHCYCEHMAVVRLACGDTSFNN. The helical transmembrane segment at 199–219 threads the bilayer; sequence IYGIAVAMFIVVLDLLLVILS. The Cytoplasmic portion of the chain corresponds to 220–239; it reads YIFILQAVLLLASQEARYKA. The chain crosses the membrane as a helical span at residues 240–260; the sequence is FGTCVSHIGAILAFYTTVVIS. At 261–275 the chain is on the extracellular side; that stretch reads SVMHRVARHAAPHVH. Residues 276–296 traverse the membrane as a helical segment; it reads ILLANFYLLFPPMVNPIIYGV. Residues 297 to 314 are Cytoplasmic-facing; it reads KTKQIRESILGVFPRKDM.

The protein belongs to the G-protein coupled receptor 1 family.

The protein resides in the cell membrane. In terms of biological role, odorant receptor. This chain is Olfactory receptor 52K2 (OR52K2), found in Homo sapiens (Human).